Here is a 1368-residue protein sequence, read N- to C-terminus: DNA-directed RNA polymerase subunit beta (1368 aa).

Belongs to the RNA polymerase beta chain family. The RNAP catalytic core consists of 2 alpha, 1 beta, 1 beta' and 1 omega subunit. When a sigma factor is associated with the core the holoenzyme is formed, which can initiate transcription.

The catalysed reaction is RNA(n) + a ribonucleoside 5'-triphosphate = RNA(n+1) + diphosphate. DNA-dependent RNA polymerase catalyzes the transcription of DNA into RNA using the four ribonucleoside triphosphates as substrates. This Burkholderia pseudomallei (strain K96243) protein is DNA-directed RNA polymerase subunit beta.